We begin with the raw amino-acid sequence, 188 residues long: Movement protein (188 aa).

The protein belongs to the tombusvirus/aureusvirus movement protein p22 family. As to quaternary structure, interacts with host protein HFI22. In terms of processing, phosphorylated.

The protein localises to the host membrane. Transports viral genome to neighboring plant cells directly through plasmosdesmata, without any budding. The movement protein allows efficient cell to cell propagation, by bypassing the host cell wall barrier. The polypeptide is Movement protein (Capsicum annuum (Capsicum pepper)).